Reading from the N-terminus, the 185-residue chain is Transmembrane protein 252 (185 aa).

2 helical membrane-spanning segments follow: residues V8–I28 and L39–W59. The tract at residues Y125 to P149 is disordered.

The protein localises to the membrane. The chain is Transmembrane protein 252 (Tmem252) from Rattus norvegicus (Rat).